A 60-amino-acid chain; its full sequence is Large ribosomal subunit protein bL32 (60 aa).

This sequence belongs to the bacterial ribosomal protein bL32 family.

The chain is Large ribosomal subunit protein bL32 from Geobacter sulfurreducens (strain ATCC 51573 / DSM 12127 / PCA).